The sequence spans 302 residues: Enolase-phosphatase E1 (302 aa).

Basic residues predominate over residues 1 to 10; sequence MSDSRLRRRQ. The tract at residues 1 to 25 is disordered; it reads MSDSRLRRRQGTAGTDNKRRADGPH. Over residues 16-25 the composition is skewed to basic and acidic residues; the sequence is DNKRRADGPH. Mg(2+)-binding residues include Asp-40 and Glu-42. Substrate is bound by residues 183–184 and Lys-217; that span reads SS. Asp-242 is a binding site for Mg(2+).

This sequence belongs to the HAD-like hydrolase superfamily. MasA/MtnC family. Monomer. Requires Mg(2+) as cofactor.

The protein localises to the cytoplasm. It localises to the nucleus. It catalyses the reaction 5-methylsulfanyl-2,3-dioxopentyl phosphate + H2O = 1,2-dihydroxy-5-(methylsulfanyl)pent-1-en-3-one + phosphate. It functions in the pathway amino-acid biosynthesis; L-methionine biosynthesis via salvage pathway; L-methionine from S-methyl-5-thio-alpha-D-ribose 1-phosphate: step 3/6. The protein operates within amino-acid biosynthesis; L-methionine biosynthesis via salvage pathway; L-methionine from S-methyl-5-thio-alpha-D-ribose 1-phosphate: step 4/6. In terms of biological role, bifunctional enzyme that catalyzes the enolization of 2,3-diketo-5-methylthiopentyl-1-phosphate (DK-MTP-1-P) into the intermediate 2-hydroxy-3-keto-5-methylthiopentenyl-1-phosphate (HK-MTPenyl-1-P), which is then dephosphorylated to form the acireductone 1,2-dihydroxy-3-keto-5-methylthiopentene (DHK-MTPene). The chain is Enolase-phosphatase E1 from Branchiostoma floridae (Florida lancelet).